The sequence spans 281 residues: Proteasome subunit beta (281 aa).

The propeptide at 1-53 (MEANTRSTGRLPAAFLTPGSSSFMDFLGEHQPEMLPGNRQLPPVQGVIEAPHG) is removed in mature form; by autocatalysis. Thr-54 (nucleophile) is an active-site residue.

It belongs to the peptidase T1B family. The 20S proteasome core is composed of 14 alpha and 14 beta subunits that assemble into four stacked heptameric rings, resulting in a barrel-shaped structure. The two inner rings, each composed of seven catalytic beta subunits, are sandwiched by two outer rings, each composed of seven alpha subunits. The catalytic chamber with the active sites is on the inside of the barrel. Has probably a gated structure, the ends of the cylinder being occluded by the N-termini of the alpha-subunits. Is likely capped by the proteasome-associated ATPase, ARC.

Its subcellular location is the cytoplasm. It catalyses the reaction Cleavage of peptide bonds with very broad specificity.. Its pathway is protein degradation; proteasomal Pup-dependent pathway. Its activity is regulated as follows. The formation of the proteasomal ATPase ARC-20S proteasome complex, likely via the docking of the C-termini of ARC into the intersubunit pockets in the alpha-rings, may trigger opening of the gate for substrate entry. Interconversion between the open-gate and close-gate conformations leads to a dynamic regulation of the 20S proteasome proteolysis activity. Peptidolytic activity is completely inhibited by lactacystin, and to a lesser extent, by N-acetyl-Leu-Leu-norleucinal (Ac-LLnL) and benzoyloxycarbonyl-Leu-Leu-Leu-vinylsulfone (Z-LLL-VS) in vitro. In terms of biological role, component of the proteasome core, a large protease complex with broad specificity involved in protein degradation. The S.coelicolor proteasome is able to cleave oligopeptides after hydrophobic residues, but not after basic or acidic residues, thus displaying chymotrypsin-like activity but not trypsin-like activity. The sequence is that of Proteasome subunit beta from Streptomyces coelicolor (strain ATCC BAA-471 / A3(2) / M145).